Reading from the N-terminus, the 923-residue chain is ATP-dependent Clp protease ATP-binding subunit ClpA homolog CD4B, chloroplastic (923 aa).

The Clp R domain maps to phenylalanine 92–glutamate 234. Repeat regions lie at residues phenylalanine 95–glycine 160 and phenylalanine 170–glutamate 234. The tract at residues leucine 255 to proline 502 is i. Glycine 300 to threonine 307 contacts ATP. The UVR domain maps to glutamate 509–glutamine 544. The interval valine 569–serine 760 is II. ATP is bound at residue glycine 643–serine 650.

Belongs to the ClpA/ClpB family.

It is found in the plastid. It localises to the chloroplast. In terms of biological role, may interact with a ClpP-like protease involved in degradation of denatured proteins in the chloroplast. The sequence is that of ATP-dependent Clp protease ATP-binding subunit ClpA homolog CD4B, chloroplastic (CD4B) from Solanum lycopersicum (Tomato).